The following is a 312-amino-acid chain: MNAGILGVGKYVPEKIVTNFDLEKIMDTSDEWIRTRTGIEERRIARDDEYTHDLAYEAAKVAIKNAGLTPDDIDLFIVATVTQEATFPSVANIIQDRLGAKNAAGMDVEAACAGFTFGVVTAAQFIKTGAYKNIVVVGADKLSKITNWDDRTTAVLFGDGAGAVVMGPVSDDHGLLSFDLGSDGSGGKYLNLDENKKIYMNGREVFRFAVRQMGEASLRVLERAGLEKEDLDLLIPHQANIRIMEASRERLNLPEEKLMKTVHKYGNTSSSSIALALVDAVEEGRIKDNDNVLLVGFGGGLTWGALIIRWGK.

Catalysis depends on residues Cys-112 and His-237. The tract at residues 238–242 (QANIR) is ACP-binding. The active site involves Asn-267.

It belongs to the thiolase-like superfamily. FabH family. Homodimer.

The protein localises to the cytoplasm. The enzyme catalyses (2S)-2-methylbutanoyl-CoA + malonyl-[ACP] + H(+) = (4S)-4-methyl-3-oxohexanoyl-[ACP] + CO2 + CoA. It catalyses the reaction 2-methylpropanoyl-CoA + malonyl-[ACP] + H(+) = 4-methyl-3-oxopentanoyl-[ACP] + CO2 + CoA. The catalysed reaction is 3-methylbutanoyl-CoA + malonyl-[ACP] + H(+) = 5-methyl-3-oxohexanoyl-[ACP] + CO2 + CoA. It carries out the reaction malonyl-[ACP] + acetyl-CoA + H(+) = 3-oxobutanoyl-[ACP] + CO2 + CoA. Its pathway is lipid metabolism; fatty acid biosynthesis. Functionally, catalyzes the condensation reaction of fatty acid synthesis by the addition to an acyl acceptor of two carbons from malonyl-ACP. Catalyzes the first condensation reaction which initiates fatty acid synthesis and may therefore play a role in governing the total rate of fatty acid production. Possesses both acetoacetyl-ACP synthase and acetyl transacylase activities. Can use branched-chain acyl-CoAs, with a preference for 2-methylbutanoyl-CoA, the precursor of odd-numbered anteiso fatty acids, at 30 degrees Celsius, which is further increased at a low temperature. Shows weak activity with acetyl-CoA. The polypeptide is Beta-ketoacyl-[acyl-carrier-protein] synthase III (Listeria monocytogenes serotype 1/2a (strain 10403S)).